The sequence spans 463 residues: Glutamate--tRNA ligase 1 (463 aa).

A 'HIGH' region motif is present at residues 11–21 (PSPTGYLHIGG). A 'KMSKS' region motif is present at residues 240–244 (KLSKR). Residue lysine 243 participates in ATP binding.

Belongs to the class-I aminoacyl-tRNA synthetase family. Glutamate--tRNA ligase type 1 subfamily. In terms of assembly, monomer.

It localises to the cytoplasm. The enzyme catalyses tRNA(Glu) + L-glutamate + ATP = L-glutamyl-tRNA(Glu) + AMP + diphosphate. Its function is as follows. Catalyzes the attachment of glutamate to tRNA(Glu) in a two-step reaction: glutamate is first activated by ATP to form Glu-AMP and then transferred to the acceptor end of tRNA(Glu). This Campylobacter jejuni subsp. doylei (strain ATCC BAA-1458 / RM4099 / 269.97) protein is Glutamate--tRNA ligase 1.